Consider the following 448-residue polypeptide: Phosphoglucosamine mutase (448 aa).

The active-site Phosphoserine intermediate is the S100. Positions 100, 240, 242, and 244 each coordinate Mg(2+). S100 is subject to Phosphoserine.

It belongs to the phosphohexose mutase family. Mg(2+) serves as cofactor. Post-translationally, activated by phosphorylation.

The catalysed reaction is alpha-D-glucosamine 1-phosphate = D-glucosamine 6-phosphate. Its function is as follows. Catalyzes the conversion of glucosamine-6-phosphate to glucosamine-1-phosphate. The chain is Phosphoglucosamine mutase from Bacillus cereus (strain G9842).